The primary structure comprises 137 residues: Protein E6 (137 aa).

2 zinc fingers span residues 17–53 and 90–127; these read CLWC…CTIC and CCYC…CYDC.

It belongs to the papillomaviridae E6 protein family. Forms homodimers. Interacts with ubiquitin-protein ligase UBE3A/E6-AP; this interaction stimulates UBE3A ubiquitin activity. Interacts with host BAK1. Interacts with human FBLN1.

Its subcellular location is the host cytoplasm. It localises to the host nucleus. Functionally, plays a major role in the induction and maintenance of cellular transformation. E6 associates with host UBE3A/E6-AP ubiquitin-protein ligase and modulates its activity. Protects host keratinocytes from apoptosis by mediating the degradation of host BAK1. May also inhibit host immune response. The chain is Protein E6 from Bos taurus (Bovine).